Here is a 204-residue protein sequence, read N- to C-terminus: Somatotropin (204 aa).

Residues 1 to 17 (MNSVVLQLSVVCLGVSS) form the signal peptide. Residue Gln-18 is modified to Pyrrolidone carboxylic acid. His-36 contacts Zn(2+). Cys-69 and Cys-177 form a disulfide bridge. Glu-186 lines the Zn(2+) pocket. A disulfide bridge links Cys-194 with Cys-202.

The protein belongs to the somatotropin/prolactin family.

The protein resides in the secreted. In terms of biological role, growth hormone plays an important role in growth control and involved in the regulation of several anabolic processes. The sequence is that of Somatotropin (gh) from Oreochromis mossambicus (Mozambique tilapia).